A 1403-amino-acid chain; its full sequence is MFRDPTAGWLTPPSPLSLLVMLLLLSRVGALRPDELFPYGESWGDQLLPEGDDESSAAVKLAIPLRFYDAQFSSLYVGTNGIISTQDFPRETQYVDDDFPTDFPAIAPFLADIDTSHSRGRILYREDTSGAVLSLAARYVRTGFPLSGSSFTPTHAFLATWEHVGAYEEVSRGAAPSGELNTFQAVLASDESDTYALFLYPANGLQFFGTRPKESYNVQLQLPARVGFCRGEADDLKREALYFSLTNTEQSVKNLYQLSNLGIPGVWAFHIGSRFALDNVRPATVGGDPSTARSSALEHPFSHAAALESYTEDSFHYYDENEEDVEYPPVEPGEAPEGHSRIDVSFNSKADPGLVDVGTSSPGSDRASPWPYPAPGNWPSYRETESASLDPQTKQGRPVGEGEVLDFRDPAELLDQMGTRAPAPPEADAALLTPVNEDLGGRNTQSYPEAGPVPSEPDVPVPPLEGEVLPHYPESGHVPPLRGGKYVIGLEDHVGSNDQVFTYNGANLETCEHSHGRCSQHAFCTDYTTGFCCHCQSRFYGNGKHCLPEGAPHRVNGKVSGRLRVGHIPVHFTDVDLHAYIVGNDGRAYTAISHVPQPAAQALLPVLPIGGLFGWLFALEKPGSENGFSLTGATFVHDVEVTFHPGEERVRITQTAEGLDPENYLSIKTNIEGQVPFIPANFTAHITPYKEFYHYRDSVVTSSSSRSFSLTSGSINQTWSYHIDQNITYQACRHAPRHLAIPATQQLTVDRAFALYSEDEGVLRFAVTNQIGPVEVDSAPVGVNPCYDGSHTCDTTARCHPGTGVDYTCECTPGFQGDGRSCVDVNECATGFHRCGPNSVCVNLVGSYRCECRSGYEFADDQHTCILIAPPPNPCLDGSHTCAPEGQARCIHHGGSSFSCACLPGFIGTGHQCSDVDECAENRCHEAAICYNTPGSFSCRCQPGYRGDGFHCTSDTVPEDSISGLKPCEYQQRYAQTQHAYPGSRIHIPQCDDQGNFVPLQCHGSTGFCWCVDRNGHEVPGTQTPPGSTPPHCGPPPEPTQRPRTVCERWRESLLEHYGGTPRDDQYVPQCDDLGHFIPLQCHGKSDFCWCVDKDGRELQGTRSQPGTRPACIPTVAPPVVRPTPRPDVTPPSVGTFLLYAQGQQIGHLPLNGSRLQKDAARTLLSLHGSIVVGIDYDCRERMVYWTDVAGRTISRASLEAGAEPETIITSGLISPEGLAIDHFRRTMYWTDSGLDKIERAELDGSERKVLFHTDLVNPRAITVDPIRGNLYWTDWNREAPKIETSSLDGENRRILINKDIGLPNGLTFDPFSKLLCWADAGTKKLECTLPDGTGRRVIQNHLNYPFSIVSYADHFYHTDWRRDGVISVNKDSGQFTDEFLPEQRSHLYGITAVYPYCPTGRK.

Residues 1 to 30 (MFRDPTAGWLTPPSPLSLLVMLLLLSRVGA) form the signal peptide. An NIDO domain is found at 108-274 (PFLADIDTSH…GVWAFHIGSR (167 aa)). The interval 323-403 (EDVEYPPVEP…KQGRPVGEGE (81 aa)) is disordered. Residues Ser386 and Ser475 are each glycosylated (O-linked (Xyl...) (chondroitin sulfate) serine). Polar residues predominate over residues 386 to 395 (SASLDPQTKQ). Positions 507 to 547 (NLETCEHSHGRCSQHAFCTDYTTGFCCHCQSRFYGNGKHCL) constitute an EGF-like 1 domain. 3 cysteine pairs are disulfide-bonded: Cys511-Cys524, Cys518-Cys533, and Cys535-Cys546. A Nidogen G2 beta-barrel domain is found at 551 to 781 (APHRVNGKVS…GPVEVDSAPV (231 aa)). Asn681, Asn716, and Asn726 each carry an N-linked (GlcNAc...) asparagine glycan. The EGF-like 2 domain occupies 782 to 823 (GVNPCYDGSHTCDTTARCHPGTGVDYTCECTPGFQGDGRSCV). Intrachain disulfides connect Cys786-Cys799, Cys793-Cys809, Cys811-Cys822, Cys828-Cys841, Cys835-Cys850, Cys852-Cys865, Cys875-Cys890, Cys882-Cys900, Cys902-Cys913, Cys919-Cys930, Cys924-Cys939, Cys941-Cys952, Cys968-Cys991, Cys1002-Cys1009, Cys1011-Cys1033, Cys1047-Cys1071, Cys1082-Cys1089, and Cys1091-Cys1112. The EGF-like 3; calcium-binding domain maps to 824-862 (DVNECATGFHRCGPNSVCVNLVGSYRCECRSGYEFADDQ). The EGF-like 4 domain occupies 871-914 (PPNPCLDGSHTCAPEGQARCIHHGGSSFSCACLPGFIGTGHQCS). The 39-residue stretch at 915–953 (DVDECAENRCHEAAICYNTPGSFSCRCQPGYRGDGFHCT) folds into the EGF-like 5; calcium-binding domain. The Cell attachment site motif lies at 946–948 (RGD). Thyroglobulin type-1 domains are found at residues 965–1033 (LKPC…PPHC) and 1044–1112 (RTVC…RPAC). The disordered stretch occupies residues 1021 to 1043 (GTQTPPGSTPPHCGPPPEPTQRP). A compositionally biased stretch (pro residues) spans 1027–1040 (GSTPPHCGPPPEPT). An N-linked (GlcNAc...) asparagine glycan is attached at Asn1152. LDL-receptor class B repeat units lie at residues 1182 to 1225 (RMVY…DHFR), 1226 to 1268 (RTMY…DPIR), 1269 to 1313 (GNLY…DPFS), 1314 to 1355 (KLLC…YADH), and 1357 to 1401 (YHTD…CPTG). Arg1336 carries the post-translational modification Omega-N-methylarginine.

Interacts with LAMA2. Interacts with COL13A1. Interacts with EFEMP2. In terms of processing, highly N- and O-glycosylated.

Its subcellular location is the secreted. The protein localises to the extracellular space. The protein resides in the extracellular matrix. It is found in the basement membrane. Cell adhesion glycoprotein. Might be involved in osteoblast differentiation. It probably has a role in cell-extracellular matrix interactions. This Mus musculus (Mouse) protein is Nidogen-2 (Nid2).